The sequence spans 220 residues: MAILFAVVARGTTILAKHAWCGGNFLEVTEQILAKIPSENNKLTYSHGNYLFHYICQDRIIYLCITDDDFERSRAFNFLNEIKKRFQTTYGSRAQTALPYAMNSEFSSVLAAQLKYHSESKGTDQVAETQAQVDELKGIMVRNIDLVAQRGEKLELLIDKTENLVDSSVTFKTTSRNLARAMCMKNLKLTIIIIIVSIVIIYIIVSAACGGLAWPSCVQK.

Residues 2–188 (AILFAVVARG…ARAMCMKNLK (187 aa)) are Cytoplasmic-facing. The region spanning 7–110 (VVARGTTILA…AMNSEFSSVL (104 aa)) is the Longin domain. Positions 125-185 (QVAETQAQVD…RNLARAMCMK (61 aa)) constitute a v-SNARE coiled-coil homology domain. A helical; Anchor for type IV membrane protein transmembrane segment spans residues 189–209 (LTIIIIIVSIVIIYIIVSAAC). Topologically, residues 210 to 220 (GGLAWPSCVQK) are vesicular.

This sequence belongs to the synaptobrevin family.

The protein resides in the cytoplasmic vesicle. Its subcellular location is the secretory vesicle membrane. It is found in the golgi apparatus. It localises to the trans-Golgi network membrane. The protein localises to the late endosome membrane. The protein resides in the lysosome membrane. Its subcellular location is the endoplasmic reticulum membrane. It is found in the phagosome membrane. It localises to the synapse. The protein localises to the synaptosome. Involved in the targeting and/or fusion of transport vesicles to their target membrane during transport of proteins from the early endosome to the lysosome. Required for heterotypic fusion of late endosomes with lysosomes and homotypic lysosomal fusion. Required for calcium regulated lysosomal exocytosis. Involved in the export of chylomicrons from the endoplasmic reticulum to the cis Golgi. Required for focal exocytosis of late endocytic vesicles during phagosome formation. The chain is Vesicle-associated membrane protein 7 from Gallus gallus (Chicken).